The following is a 382-amino-acid chain: UDP-N-acetylglucosamine--N-acetylmuramyl-(pentapeptide) pyrophosphoryl-undecaprenol N-acetylglucosamine transferase (382 aa).

UDP-N-acetyl-alpha-D-glucosamine-binding positions include 22 to 24, Asn-134, Arg-186, Ser-212, 285 to 290, and Gln-311; these read TGG and ALTVAE.

The protein belongs to the glycosyltransferase 28 family. MurG subfamily.

Its subcellular location is the cell inner membrane. It carries out the reaction di-trans,octa-cis-undecaprenyl diphospho-N-acetyl-alpha-D-muramoyl-L-alanyl-D-glutamyl-meso-2,6-diaminopimeloyl-D-alanyl-D-alanine + UDP-N-acetyl-alpha-D-glucosamine = di-trans,octa-cis-undecaprenyl diphospho-[N-acetyl-alpha-D-glucosaminyl-(1-&gt;4)]-N-acetyl-alpha-D-muramoyl-L-alanyl-D-glutamyl-meso-2,6-diaminopimeloyl-D-alanyl-D-alanine + UDP + H(+). It functions in the pathway cell wall biogenesis; peptidoglycan biosynthesis. Cell wall formation. Catalyzes the transfer of a GlcNAc subunit on undecaprenyl-pyrophosphoryl-MurNAc-pentapeptide (lipid intermediate I) to form undecaprenyl-pyrophosphoryl-MurNAc-(pentapeptide)GlcNAc (lipid intermediate II). The protein is UDP-N-acetylglucosamine--N-acetylmuramyl-(pentapeptide) pyrophosphoryl-undecaprenol N-acetylglucosamine transferase of Pseudoalteromonas atlantica (strain T6c / ATCC BAA-1087).